The primary structure comprises 775 residues: MKLLSLLMLAGIAQAIVPPREPRPPTGGGNKLLTYKECVPRATISPRSTSLAWINSDEDGQYISQSDDGALILQNIVTNTNKTLVAADKVPKGYYDYWFKPDLSAVLWATNYTKQYRHSYFANYFILDIEKGSLTPLAQDQAGDIQYAQWSPVDNSIAYVRGNDLYIWNNGTTKRITENGGPDIFNGVPDWVYEEEIFGDRFALWFSPDGEYLAYLRFNETGVPTYTIPYYKNKQKIAPAYPRELEIRYPKVSAKNPTVQFHLLNIASSQESTIPVTAFPENDLVIGEVAWLSSGHDSVAYRAFNRVQDREKIVSIKVESKESKVIRERDGTDGWIDNLLSMSYIGDVNGKEYYVDISDASGWAHIYLYPVDGGKEIALTKGEWEVVAILKVDTKKKLIYFTSTKYHSTTRHVYSVSYDTNVMTPLVNDKEAAYYTASFSAKGGYYILSYQGPNVPYQELYSTKDSKKPLKTITSNDALLEKLKEYKLPMVSFFEIKLPSGETLNVKQRLPPNFNPHKKYPVLFTPYGGPGAQEVSQAWNSLDFKSYITSDPELEYVTWTVDNRGTGYKGRKFRSAVAKRLGFLEAQDQVFAAKELLKNRWADKDHIGIWGWSYGGFLTAKTLETDSGVFTFGISTAPVSDFRLYDSMYTERYMKTVELNADGYSETAVHKVDGFKNLKGHYLIQHGTGDDNVHFQNAAVLSNTLMNGGVTADKLTTQWFTDSDHGIRYDMDSTYQYKQLAKMVYDQKQRRPERPPMHQWSKRVLAALFGERAEE.

The N-terminal stretch at 1 to 15 (MKLLSLLMLAGIAQA) is a signal peptide. Residues Asn81, Asn111, Asn170, and Asn219 are each glycosylated (N-linked (GlcNAc...) asparagine). Active-site charge relay system residues include Ser613, Asp690, and His725.

It belongs to the peptidase S9B family.

The protein localises to the secreted. The catalysed reaction is Release of an N-terminal dipeptide, Xaa-Yaa-|-Zaa-, from a polypeptide, preferentially when Yaa is Pro, provided Zaa is neither Pro nor hydroxyproline.. Its function is as follows. Extracellular dipeptidyl-peptidase which removes N-terminal dipeptides sequentially from polypeptides having unsubstituted N-termini provided that the penultimate residue is proline. Contributes to pathogenicity. The polypeptide is Dipeptidyl peptidase 4 (DPP4) (Trichophyton tonsurans (Scalp ringworm fungus)).